The chain runs to 630 residues: ATP-dependent zinc metalloprotease FtsH (630 aa).

Over 1–7 (MNNFMKN) the chain is Cytoplasmic. The helical transmembrane segment at 8–28 (IGFYLVLIALSILVAQFFVDT) threads the bilayer. Residues 29 to 111 (DVNTIVDTDV…KTEPEPTAPW (83 aa)) are Periplasmic-facing. A helical membrane pass occupies residues 112-132 (WTGMLAYILPIILLIGAWFFI). The Cytoplasmic segment spans residues 133 to 630 (MQRMQGGGSQ…ENREHENNDK (498 aa)). 203–210 (GPPGTGKT) contacts ATP. Histidine 425 serves as a coordination point for Zn(2+). The active site involves glutamate 426. 2 residues coordinate Zn(2+): histidine 429 and aspartate 501. Residues 601–630 (KLIKGEPLDDDSIDNSTDENENREHENNDK) form a disordered region. Positions 608–619 (LDDDSIDNSTDE) are enriched in acidic residues. The span at 620 to 630 (NENREHENNDK) shows a compositional bias: basic and acidic residues.

The protein in the central section; belongs to the AAA ATPase family. In the C-terminal section; belongs to the peptidase M41 family. In terms of assembly, homohexamer. It depends on Zn(2+) as a cofactor.

It is found in the cell inner membrane. Acts as a processive, ATP-dependent zinc metallopeptidase for both cytoplasmic and membrane proteins. Plays a role in the quality control of integral membrane proteins. The protein is ATP-dependent zinc metalloprotease FtsH of Halothermothrix orenii (strain H 168 / OCM 544 / DSM 9562).